A 582-amino-acid chain; its full sequence is Histone deacetylase 9-B (582 aa).

The interval Ser-146–Pro-195 is interaction with mef2. Residues Ser-189–Lys-205 are compositionally biased toward polar residues. Disordered stretches follow at residues Ser-189–Asn-254, Thr-270–Leu-314, Leu-409–Ser-447, and Val-496–Ser-567. Basic and acidic residues-rich tracts occupy residues Asp-213–Val-224 and Lys-238–Gly-253. Positions Thr-270–Ala-289 are enriched in low complexity. Polar residues predominate over residues Gly-295–Leu-314.

Belongs to the histone deacetylase family. HD type 2 subfamily. Homodimer. Interacts with mef2.

The protein localises to the nucleus. It carries out the reaction N(6)-acetyl-L-lysyl-[histone] + H2O = L-lysyl-[histone] + acetate. Its function is as follows. Devoided of intrinsic deacetylase activity, promotes the deacetylation of lysine residues on the N-terminal part of the core histones (H2A, H2B, H3 and H4) by recruiting other histone deacetylases. Histone deacetylation gives a tag for epigenetic repression and plays an important role in transcriptional regulation, cell cycle progression and developmental events. Represses MEF2-dependent transcription. In Danio rerio (Zebrafish), this protein is Histone deacetylase 9-B (hdac9b).